Reading from the N-terminus, the 87-residue chain is Defensin-like protein 176 (87 aa).

The N-terminal stretch at 1–23 (MAKATSSLVVPIIFLVIFALVEQ) is a signal peptide. 4 disulfides stabilise this stretch: Cys-27-Cys-66, Cys-36-Cys-55, Cys-39-Cys-60, and Cys-43-Cys-62.

This sequence belongs to the DEFL family.

It is found in the secreted. The polypeptide is Defensin-like protein 176 (LCR65) (Arabidopsis thaliana (Mouse-ear cress)).